A 183-amino-acid polypeptide reads, in one-letter code: Large ribosomal subunit protein uL6 (183 aa).

This sequence belongs to the universal ribosomal protein uL6 family. Part of the 50S ribosomal subunit.

Functionally, this protein binds to the 23S rRNA, and is important in its secondary structure. It is located near the subunit interface in the base of the L7/L12 stalk, and near the tRNA binding site of the peptidyltransferase center. The chain is Large ribosomal subunit protein uL6 from Chlamydia muridarum (strain MoPn / Nigg).